A 180-amino-acid polypeptide reads, in one-letter code: FMN reductase (NADH) RutF (180 aa).

It belongs to the non-flavoprotein flavin reductase family. RutF subfamily.

It catalyses the reaction FMNH2 + NAD(+) = FMN + NADH + 2 H(+). Functionally, catalyzes the reduction of FMN to FMNH2 which is used to reduce pyrimidine by RutA via the Rut pathway. This chain is FMN reductase (NADH) RutF, found in Bradyrhizobium diazoefficiens (strain JCM 10833 / BCRC 13528 / IAM 13628 / NBRC 14792 / USDA 110).